The chain runs to 500 residues: NAD(P)H-quinone oxidoreductase chain 4, chloroplastic (500 aa).

Transmembrane regions (helical) follow at residues 4 to 24, 35 to 55, 87 to 107, 113 to 130, 134 to 154, 167 to 187, 211 to 231, 242 to 262, 272 to 292, 305 to 325, 330 to 350, 386 to 406, 416 to 436, and 462 to 482; these read FPWL…MLFL, YTIC…CYNF, IGTI…AFPV, LFHF…GSFS, LLLF…LLSM, FILY…GISL, ILFY…IPLH, HYST…YGLV, AHSM…IYAA, IAYS…SITD, GAIL…FLAG, LALP…GIIT, ILII…LLSM, and LFLS…PDFV.

It belongs to the complex I subunit 4 family.

The protein localises to the plastid. It is found in the chloroplast thylakoid membrane. It catalyses the reaction a plastoquinone + NADH + (n+1) H(+)(in) = a plastoquinol + NAD(+) + n H(+)(out). It carries out the reaction a plastoquinone + NADPH + (n+1) H(+)(in) = a plastoquinol + NADP(+) + n H(+)(out). In Nasturtium officinale (Watercress), this protein is NAD(P)H-quinone oxidoreductase chain 4, chloroplastic.